Consider the following 154-residue polypeptide: Phospholipase A2 OS1 (154 aa).

Residues 1-27 (MHPAHLLVLLAVCVSLLGAARIPPLPL) form the signal peptide. Cystine bridges form between C38-C104, C54-C153, C56-C72, C71-C132, C78-C125, C88-C118, and C111-C123. 2 residues coordinate Ca(2+): G57 and G59. H75 is an active-site residue. D76 lines the Ca(2+) pocket. D126 is a catalytic residue.

Belongs to the phospholipase A2 family. Group I subfamily. D49 sub-subfamily. In terms of assembly, monomer. It depends on Ca(2+) as a cofactor. Expressed by the venom gland.

It is found in the secreted. The catalysed reaction is a 1,2-diacyl-sn-glycero-3-phosphocholine + H2O = a 1-acyl-sn-glycero-3-phosphocholine + a fatty acid + H(+). Its function is as follows. Snake venom phospholipase A2 (PLA2) that has a low specific activity on phospholipid substrates, and is neither neurotoxic, nor myotoxic. Induces endothelial cell migration which is mediated, at least in part, by its hydrolytic products. Shows antimalarial activity, but is not able to potently inhibit HIV-1 replication. Binds in a calcium-independent fashion with very high affinity to a muscle-type (M-type) PLA2 receptor, but is a very poor ligand for neuronal-type (N-type) receptors. PLA2 catalyzes the calcium-dependent hydrolysis of the 2-acyl groups in 3-sn-phosphoglycerides. This Oxyuranus scutellatus scutellatus (Australian taipan) protein is Phospholipase A2 OS1.